A 271-amino-acid chain; its full sequence is Protein CDV3 homolog (271 aa).

Basic and acidic residues predominate over residues 37-47; it reads KREVVKPKKPE. Disordered regions lie at residues 37–151 and 186–271; these read KREV…GHGP and SQQA…DEAS. The segment covering 48–61 has biased composition (low complexity); it reads VAAGGVAVVGENEN. A compositionally biased stretch (acidic residues) spans 73 to 82; the sequence is VEEEWKEFEE. Residues 95–114 show a composition bias toward polar residues; the sequence is QLSTISSARSRTAQESSESQ. Phosphoserine is present on serine 134. Positions 224–242 are enriched in basic and acidic residues; sequence RPEEQRKKKNEPAFEEVRH.

This sequence belongs to the CDV3 family.

The polypeptide is Protein CDV3 homolog (Drosophila melanogaster (Fruit fly)).